The sequence spans 185 residues: NAD(P)H-dependent FAD/FMN reductase GTNG_3158 (185 aa).

As to quaternary structure, anthranilate 3-monooxygenase consists of a reductase component (GTNG_3158) and an oxygenase component HpaH.

It catalyses the reaction FADH2 + NAD(+) = FAD + NADH + 2 H(+). The catalysed reaction is FADH2 + NADP(+) = FAD + NADPH + 2 H(+). Its function is as follows. Involved in the pathway of tryptophan degradation. Reduces FAD/FMN to FADH(2)/FMNH(2), which are subsequently used for the hydroxylation of anthranilate. It can reduce either FAD or flavin mononucleotide (FMN) but prefers FAD. The enzyme has a slight preference for NADPH as acceptor. This Geobacillus thermodenitrificans (strain NG80-2) protein is NAD(P)H-dependent FAD/FMN reductase GTNG_3158.